Reading from the N-terminus, the 120-residue chain is MAATTLTGDDGHFGAARRAGGCVAFTVRRYNRHVVGFSGIRARMLEKLRDAGRLLPADTKCALHTVPAACARCRRSLTLTPAVSCLPCGHSCLCTDCDQLFANVCFECKSAVQFKLRFIK.

The RING-type zinc-finger motif lies at 70–109 (CARCRRSLTLTPAVSCLPCGHSCLCTDCDQLFANVCFECK).

This is an uncharacterized protein from Orgyia pseudotsugata multicapsid polyhedrosis virus (OpMNPV).